Consider the following 284-residue polypeptide: Formamidopyrimidine-DNA glycosylase (284 aa).

Catalysis depends on proline 2, which acts as the Schiff-base intermediate with DNA. Catalysis depends on glutamate 3, which acts as the Proton donor. The active-site Proton donor; for beta-elimination activity is the lysine 61. Residues histidine 95, arginine 114, and arginine 159 each contribute to the DNA site. An FPG-type zinc finger spans residues 244 to 278 (WVYGRKGQPCRVCNTPIERIRLAGRSTHFCPTCQR). Arginine 268 serves as the catalytic Proton donor; for delta-elimination activity.

Belongs to the FPG family. Monomer. It depends on Zn(2+) as a cofactor.

The catalysed reaction is Hydrolysis of DNA containing ring-opened 7-methylguanine residues, releasing 2,6-diamino-4-hydroxy-5-(N-methyl)formamidopyrimidine.. It catalyses the reaction 2'-deoxyribonucleotide-(2'-deoxyribose 5'-phosphate)-2'-deoxyribonucleotide-DNA = a 3'-end 2'-deoxyribonucleotide-(2,3-dehydro-2,3-deoxyribose 5'-phosphate)-DNA + a 5'-end 5'-phospho-2'-deoxyribonucleoside-DNA + H(+). Its function is as follows. Involved in base excision repair of DNA damaged by oxidation or by mutagenic agents. Acts as a DNA glycosylase that recognizes and removes damaged bases. Has a preference for oxidized purines, such as 7,8-dihydro-8-oxoguanine (8-oxoG). Has AP (apurinic/apyrimidinic) lyase activity and introduces nicks in the DNA strand. Cleaves the DNA backbone by beta-delta elimination to generate a single-strand break at the site of the removed base with both 3'- and 5'-phosphates. The protein is Formamidopyrimidine-DNA glycosylase of Gloeobacter violaceus (strain ATCC 29082 / PCC 7421).